The chain runs to 493 residues: Activin receptor type-1C (493 aa).

The signal sequence occupies residues 1 to 25 (MTPARRSALSLALLLVALASDLAAG). The Extracellular portion of the chain corresponds to 26 to 113 (LKCVCLLCDS…PDAPRLGPTE (88 aa)). The chain crosses the membrane as a helical span at residues 114 to 134 (LTVVITVPVCLLSIAAMLTIW). Residues 135–493 (ACQDRQCTYR…QLCVKEDCKA (359 aa)) lie on the Cytoplasmic side of the membrane. A GS domain is found at 165–194 (KTLKDLIYDATASGSGSGPPLLVQRTIART). In terms of domain architecture, Protein kinase spans 195–485 (IVLQEIVGKG…LRVKKTISQL (291 aa)). Residues 201-209 (VGKGRFGEV) and K222 each bind ATP. D323 acts as the Proton acceptor in catalysis.

This sequence belongs to the protein kinase superfamily. TKL Ser/Thr protein kinase family. TGFB receptor subfamily. In terms of assembly, binds the type 2 receptor protein ACVR2A. Mg(2+) is required as a cofactor. Mn(2+) serves as cofactor. In terms of tissue distribution, expressed in brain, kidney, lung, liver, testis, ovary, adrenal gland, heart, prostate, gastrointestinal tract, and spleen. Distributed throughout both adult and embryonic central nervous system and pancreatic islet cells.

The protein localises to the membrane. It carries out the reaction L-threonyl-[receptor-protein] + ATP = O-phospho-L-threonyl-[receptor-protein] + ADP + H(+). It catalyses the reaction L-seryl-[receptor-protein] + ATP = O-phospho-L-seryl-[receptor-protein] + ADP + H(+). Functionally, serine/threonine protein kinase which forms a receptor complex on ligand binding. The receptor complex consists of 2 type II and 2 type I transmembrane serine/threonine kinases. Type II receptors phosphorylate and activate type I receptors which autophosphorylate, then bind and activate SMAD transcriptional regulators, SMAD2 and SMAD3. Receptor for activin AB, activin B, activin E and NODAL. Upon NODAL binding, activation results in increased apoptosis and reduced proliferation through suppression of AKT signaling and the activation of Smad2-dependent signaling pathway in pancreatic beta-cells, trophoblasts, epithelial or neuronal cells. Acts as a positive regulator for macrophage activation partially through down-regulation of PPARG expression. The chain is Activin receptor type-1C from Rattus norvegicus (Rat).